A 1104-amino-acid chain; its full sequence is DNA polymerase delta catalytic subunit (1104 aa).

Positions 1–60 (MKRSIVTGGGNNDKKFKAQPPPKNNYRGGGDDEEDDEFEEDDDEDEGDEFGEEEDEDDID) are disordered. Residues 31 to 60 (DDEEDDEFEEDDDEDEGDEFGEEEDEDDID) are compositionally biased toward acidic residues. The Zn(2+) site is built by Cys-1012, Cys-1015, Cys-1027, and Cys-1030. The CysA-type zinc-finger motif lies at 1012 to 1030 (CMNCPKELTDTESTTCINC). [4Fe-4S] cluster-binding residues include Cys-1059, Cys-1062, Cys-1072, and Cys-1077. The short motif at 1059-1077 (CQRCSGSLHQPVLCSNRDC) is the CysB motif element.

It belongs to the DNA polymerase type-B family. As to quaternary structure, heterotetramer composed of subunits of 125 kDa, 50 kDa, 66 kDa and 12 kDa. The 125 kDa subunit contains the polymerase active site and most likely the active site for the 3'-5' exonuclease activity. It depends on [4Fe-4S] cluster as a cofactor.

The protein localises to the nucleus. The enzyme catalyses DNA(n) + a 2'-deoxyribonucleoside 5'-triphosphate = DNA(n+1) + diphosphate. Possesses two enzymatic activities: DNA synthesis (polymerase) and an exonucleolytic activity that degrades single stranded DNA in the 3'- to 5'-direction. The chain is DNA polymerase delta catalytic subunit (pold1) from Dictyostelium discoideum (Social amoeba).